The following is a 697-amino-acid chain: Serine/threonine-protein kinase tousled-like 2 (697 aa).

Disordered regions lie at residues 27-136 and 289-315; these read KAPL…TAPV and LAKR…NKTN. The span at 31–44 shows a compositional bias: polar residues; it reads NSESSNQSLCSLGS. A compositionally biased stretch (basic and acidic residues) spans 46–62; sequence SDKELEQTPEKKQNDQR. Over residues 111–131 the composition is skewed to low complexity; the sequence is SSPQHSLSNPLPLPSQQCSPP. Coiled coils occupy residues 264–293 and 334–372; these read AFQN…AKRK and FKLR…IHNE. Residues 387–666 enclose the Protein kinase domain; the sequence is YLLLHLLGRG…VQQLACDPYL (280 aa). ATP is bound by residues 393–401 and lysine 416; that span reads LGRGGFSEV. The active-site Proton acceptor is the aspartate 517.

It belongs to the protein kinase superfamily. Ser/Thr protein kinase family. In terms of assembly, monomer. May form homodimers; homodimerization may enhance autophosphoylation and enzymatic activity. Heterodimer with TLK1. Requires Mg(2+) as cofactor. Post-translationally, phosphorylated. Autophosphorylated; phosphorylation promotes the assembly of higher order oligomers and enzymatic activity.

It is found in the nucleus. The protein resides in the nucleoplasm. It localises to the cytoplasm. Its subcellular location is the perinuclear region. The protein localises to the cytoskeleton. It catalyses the reaction L-seryl-[protein] + ATP = O-phospho-L-seryl-[protein] + ADP + H(+). It carries out the reaction L-threonyl-[protein] + ATP = O-phospho-L-threonyl-[protein] + ADP + H(+). In terms of biological role, serine/threonine-protein kinase involved in the process of chromatin assembly and probably also DNA replication, transcription, repair, and chromosome segregation. Negative regulator of amino acid starvation-induced autophagy. This is Serine/threonine-protein kinase tousled-like 2 from Xenopus tropicalis (Western clawed frog).